A 437-amino-acid polypeptide reads, in one-letter code: Aspartic proteinase CDR1 (437 aa).

A signal peptide spans 1 to 25 (MASLFSSVLLSLCLLSSLFLSNANA). Residues 26–73 (KPKLGFTADLIHRDSPKSPFYNPMETSSQRLRNAIHRSVNRVFHFTEK) constitute a propeptide, activation peptide. In terms of domain architecture, Peptidase A1 spans 90-430 (YLMNVSIGTP…DTVSKTVSFK (341 aa)). Asn-93 is a glycosylation site (N-linked (GlcNAc...) asparagine). Residues Asp-108 and Asp-319 contribute to the active site.

This sequence belongs to the peptidase A1 family.

The protein resides in the secreted. It localises to the extracellular space. Its subcellular location is the apoplast. Functionally, involved in salicylic acid-dependent inducible resistance responses. May release an endogenous peptide elicitor required for the activation of inducible resistance mechanisms. Possesses protease activity in vitro. The protein is Aspartic proteinase CDR1 (CDR1) of Arabidopsis thaliana (Mouse-ear cress).